Reading from the N-terminus, the 264-residue chain is uncharacterized protein (264 aa).

A helical transmembrane segment spans residues 7–27; the sequence is LTLGICLVLLIILIVGYVIMT.

Belongs to the staphylococcal tandem lipoprotein family.

The protein localises to the cell membrane. This is an uncharacterized protein from Staphylococcus aureus (strain N315).